Reading from the N-terminus, the 264-residue chain is Thymidylate synthase (264 aa).

R21 is a dUMP binding site. H51 contacts (6R)-5,10-methylene-5,6,7,8-tetrahydrofolate. 126–127 (RR) contacts dUMP. Catalysis depends on C146, which acts as the Nucleophile. Residues 166 to 169 (RSCD), N177, and 207 to 209 (HLY) each bind dUMP. D169 is a binding site for (6R)-5,10-methylene-5,6,7,8-tetrahydrofolate. Position 263 (A263) interacts with (6R)-5,10-methylene-5,6,7,8-tetrahydrofolate.

This sequence belongs to the thymidylate synthase family. Bacterial-type ThyA subfamily. In terms of assembly, homodimer.

The protein resides in the cytoplasm. It catalyses the reaction dUMP + (6R)-5,10-methylene-5,6,7,8-tetrahydrofolate = 7,8-dihydrofolate + dTMP. The protein operates within pyrimidine metabolism; dTTP biosynthesis. Catalyzes the reductive methylation of 2'-deoxyuridine-5'-monophosphate (dUMP) to 2'-deoxythymidine-5'-monophosphate (dTMP) while utilizing 5,10-methylenetetrahydrofolate (mTHF) as the methyl donor and reductant in the reaction, yielding dihydrofolate (DHF) as a by-product. This enzymatic reaction provides an intracellular de novo source of dTMP, an essential precursor for DNA biosynthesis. The chain is Thymidylate synthase from Aeromonas hydrophila subsp. hydrophila (strain ATCC 7966 / DSM 30187 / BCRC 13018 / CCUG 14551 / JCM 1027 / KCTC 2358 / NCIMB 9240 / NCTC 8049).